The primary structure comprises 400 residues: uncharacterized protein (400 aa).

To M.jannaschii MJ1544 and MJ1637.

This is an uncharacterized protein from Haemophilus influenzae (strain ATCC 51907 / DSM 11121 / KW20 / Rd).